The following is a 295-amino-acid chain: 4-hydroxy-tetrahydrodipicolinate synthase (295 aa).

Pyruvate is bound at residue Thr-48. Tyr-135 serves as the catalytic Proton donor/acceptor. Catalysis depends on Lys-163, which acts as the Schiff-base intermediate with substrate. Val-204 is a binding site for pyruvate.

It belongs to the DapA family. Homotetramer; dimer of dimers.

The protein resides in the cytoplasm. The catalysed reaction is L-aspartate 4-semialdehyde + pyruvate = (2S,4S)-4-hydroxy-2,3,4,5-tetrahydrodipicolinate + H2O + H(+). The protein operates within amino-acid biosynthesis; L-lysine biosynthesis via DAP pathway; (S)-tetrahydrodipicolinate from L-aspartate: step 3/4. Its function is as follows. Catalyzes the condensation of (S)-aspartate-beta-semialdehyde [(S)-ASA] and pyruvate to 4-hydroxy-tetrahydrodipicolinate (HTPA). The protein is 4-hydroxy-tetrahydrodipicolinate synthase of Francisella tularensis subsp. novicida (strain U112).